The sequence spans 977 residues: Disks large-associated protein 3 (977 aa).

The span at 1–10 shows a compositional bias: basic and acidic residues; it reads MRGYHGDRGS. Disordered regions lie at residues 1–30, 52–90, 137–167, 181–289, 398–417, and 529–582; these read MRGYHGDRGSHPRPARFADQQHMDVGPAAR, AGLGHLSPEGPLSLSEGPSSVGPEGGPGGVGAGGSSSTF, FHTLPYQRGPAGPGPGPGSGAAPEARSESPS, AKSH…CLDA, AMGDEESGDSDGSPKTSPKA, and PGSS…SADG. Residues 53–73 show a composition bias toward low complexity; sequence GLGHLSPEGPLSLSEGPSSVG. The residue at position 58 (S58) is a Phosphoserine. A compositionally biased stretch (gly residues) spans 74 to 85; that stretch reads PEGGPGGVGAGG. Basic and acidic residues predominate over residues 189-201; sequence PGKRDYNGPKAEG. Residues 202 to 212 are compositionally biased toward low complexity; the sequence is RSSSGGDSYSG. A compositionally biased stretch (basic residues) spans 221 to 245; the sequence is SHHHHHHHHHHHHQSRHGKRSKSKD. A compositionally biased stretch (low complexity) spans 258–271; it reads GWWSSDDNLDSDSG. Phosphoserine is present on residues S404, S407, S410, and S414. Residues 538 to 547 are compositionally biased toward pro residues; sequence APPPIPPGSQ. A phosphoserine mark is found at S641 and S643. Disordered stretches follow at residues 739–788 and 906–939; these read EGYP…RTSP and EEKKVPPPIPKKPSRGRGVPVKERSLDSVDRQRQ. Pro residues predominate over residues 754 to 763; it reads PGPPPVPAPG. Basic and acidic residues-rich tracts occupy residues 767 to 777 and 925 to 939; these read GRRDSWMERGS and PVKERSLDSVDRQRQ. Residues S930, S933, and S965 each carry the phosphoserine modification.

This sequence belongs to the SAPAP family. As to quaternary structure, interacts with DLG1 and DLG4/PSD-95. In terms of tissue distribution, expressed in most brain regions.

Its subcellular location is the cell membrane. The protein resides in the postsynaptic density. It localises to the synapse. May play a role in the molecular organization of synapses and neuronal cell signaling. Could be an adapter protein linking ion channel to the subsynaptic cytoskeleton. May induce enrichment of PSD-95/SAP90 at the plasma membrane. This Rattus norvegicus (Rat) protein is Disks large-associated protein 3 (Dlgap3).